A 141-amino-acid polypeptide reads, in one-letter code: MHSSTILFVLGAAILAVNGVTTALIDDEVDKGTQEKHRLLRSNLMKHETGEERFELPAWFIGSKAYKQRKRERYEQAKRYYYTLVQDKNHDETFRELDTKRKTLKSALKFIAWNYKGFSNYTKRRIRKKYTAYRIKNPRPW.

A signal peptide spans 1–19; it reads MHSSTILFVLGAAILAVNG. Positions 38 to 53 match the RxLR-dEER motif; sequence RLLRSNLMKHETGEER. A glycan (N-linked (GlcNAc...) asparagine) is linked at asparagine 120.

The protein belongs to the RxLR effector family.

The protein resides in the secreted. It is found in the host nucleus. Secreted effector that completely suppresses the host cell death induced by cell death-inducing proteins. The sequence is that of Secreted RxLR effector protein 69 from Plasmopara viticola (Downy mildew of grapevine).